Here is a 444-residue protein sequence, read N- to C-terminus: Acyl-CoA 6-desaturase (444 aa).

The tract at residues 1-21 (MGKGGNQGEGSTERQAPMPTF) is disordered. Over 1–130 (MGKGGNQGEG…EDMNLFKTNH (130 aa)) the chain is Cytoplasmic. Residues 18–95 (MPTFRWEEIQ…LKPLLIGELA (78 aa)) enclose the Cytochrome b5 heme-binding domain. The chain crosses the membrane as a helical span at residues 131-151 (LFFFLLLSHIIVMESLAWFIL). A topological domain (lumenal) is located at residue Ser-152. The chain crosses the membrane as a helical span at residues 153 to 173 (YFGTGWIPTLVTAFVLATSQA). Residues 174 to 264 (QAGWLQHDYG…KYLPYNHQHE (91 aa)) are Cytoplasmic-facing. A Histidine box-1 motif is present at residues 180–184 (HDYGH). A Histidine box-2 motif is present at residues 217 to 221 (HFQHH). Residues 265–285 (YFFLIGPPLLIPMYFQYQIIM) form a helical membrane-spanning segment. Residues 286–305 (TMISRRDWVDLAWAISYYMR) are Lumenal-facing. Residues 306–326 (FFYTYIPFYGILGALVFLNFI) traverse the membrane as a helical segment. Residues 327 to 444 (RFLESHWFVW…ELWLDAYLHK (118 aa)) are Cytoplasmic-facing. Positions 382–386 (QIEHH) match the Histidine box-3 motif.

It belongs to the fatty acid desaturase type 1 family. In terms of tissue distribution, highly expressed in the adrenal gland, liver, brain, and testis, tissues where lipogenesis and steroidogenesis are active. Also detected in lung, heart, and skeletal muscle.

It localises to the endoplasmic reticulum membrane. The catalysed reaction is (9Z,12Z)-octadecadienoyl-CoA + 2 Fe(II)-[cytochrome b5] + O2 + 2 H(+) = (6Z,9Z,12Z)-octadecatrienoyl-CoA + 2 Fe(III)-[cytochrome b5] + 2 H2O. It catalyses the reaction (9Z,12Z,15Z)-octadecatrienoyl-CoA + 2 Fe(II)-[cytochrome b5] + O2 + 2 H(+) = (6Z,9Z,12Z,15Z)-octadecatetraenoyl-CoA + 2 Fe(III)-[cytochrome b5] + 2 H2O. It carries out the reaction (9Z,12Z,15Z,18Z,21Z)-tetracosapentaenoyl-CoA + 2 Fe(II)-[cytochrome b5] + O2 + 2 H(+) = (6Z,9Z,12Z,15Z,18Z,21Z)-tetracosahexaenoyl-CoA + 2 Fe(III)-[cytochrome b5] + 2 H2O. The enzyme catalyses (11E)-octadecenoyl-CoA + 2 Fe(II)-[cytochrome b5] + O2 + 2 H(+) = (6Z,11E)-octadecadienoyl-CoA + 2 Fe(III)-[cytochrome b5] + 2 H2O. The catalysed reaction is (11Z,14Z)-eicosadienoyl-CoA + 2 Fe(II)-[cytochrome b5] + O2 + 2 H(+) = (8Z,11Z,14Z)-eicosatrienoyl-CoA + 2 Fe(III)-[cytochrome b5] + 2 H2O. It catalyses the reaction (11Z,14Z,17Z)-eicosatrienoyl-CoA + 2 Fe(II)-[cytochrome b5] + O2 + 2 H(+) = (8Z,11Z,14Z,17Z)-eicosatetraenoyl-CoA + 2 Fe(III)-[cytochrome b5] + 2 H2O. It functions in the pathway lipid metabolism; polyunsaturated fatty acid biosynthesis. Its function is as follows. Involved in the biosynthesis of highly unsaturated fatty acids (HUFA) from the essential polyunsaturated fatty acids (PUFA) linoleic acid (LA) (18:2n-6) and alpha-linolenic acid (ALA) (18:3n-3) precursors, acting as a fatty acyl-coenzyme A (CoA) desaturase that introduces a cis double bond at carbon 6 of the fatty acyl chain. Catalyzes the first and rate limiting step in this pathway which is the desaturation of LA (18:2n-6) and ALA (18:3n-3) into gamma-linoleate (GLA) (18:3n-6) and stearidonate (18:4n-3), respectively. Subsequently, in the biosynthetic pathway of HUFA n-3 series, it desaturates tetracosapentaenoate (24:5n-3) to tetracosahexaenoate (24:6n-3), which is then converted to docosahexaenoate (DHA)(22:6n-3), an important lipid for nervous system function. It can also desaturate (11E)-octadecenoate (trans-vaccenoate) at carbon 6 generating (6Z,11E)-octadecadienoate. In addition to Delta-6 activity, this enzyme exhibits Delta-8 activity with slight biases toward n-3 fatty acyl-CoA substrates. This Mus musculus (Mouse) protein is Acyl-CoA 6-desaturase.